A 130-amino-acid chain; its full sequence is Small ribosomal subunit protein uS8 (130 aa).

The protein belongs to the universal ribosomal protein uS8 family.

The chain is Small ribosomal subunit protein uS8 (RPS22) from Candida glabrata (strain ATCC 2001 / BCRC 20586 / JCM 3761 / NBRC 0622 / NRRL Y-65 / CBS 138) (Yeast).